Consider the following 163-residue polypeptide: Shikimate kinase (163 aa).

10 to 15 (GVGKTT) serves as a coordination point for ATP. Thr-14 is a Mg(2+) binding site. Residues Asp-28, Arg-52, and Gly-75 each coordinate substrate. ATP is bound at residue Arg-116. Arg-134 is a substrate binding site.

This sequence belongs to the shikimate kinase family. As to quaternary structure, monomer. It depends on Mg(2+) as a cofactor.

Its subcellular location is the cytoplasm. The catalysed reaction is shikimate + ATP = 3-phosphoshikimate + ADP + H(+). The protein operates within metabolic intermediate biosynthesis; chorismate biosynthesis; chorismate from D-erythrose 4-phosphate and phosphoenolpyruvate: step 5/7. Catalyzes the specific phosphorylation of the 3-hydroxyl group of shikimic acid using ATP as a cosubstrate. The polypeptide is Shikimate kinase (Streptococcus suis (strain 98HAH33)).